Reading from the N-terminus, the 957-residue chain is Glycine dehydrogenase (decarboxylating) (957 aa).

K708 is modified (N6-(pyridoxal phosphate)lysine).

This sequence belongs to the GcvP family. The glycine cleavage system is composed of four proteins: P, T, L and H. Pyridoxal 5'-phosphate serves as cofactor.

The enzyme catalyses N(6)-[(R)-lipoyl]-L-lysyl-[glycine-cleavage complex H protein] + glycine + H(+) = N(6)-[(R)-S(8)-aminomethyldihydrolipoyl]-L-lysyl-[glycine-cleavage complex H protein] + CO2. Functionally, the glycine cleavage system catalyzes the degradation of glycine. The P protein binds the alpha-amino group of glycine through its pyridoxal phosphate cofactor; CO(2) is released and the remaining methylamine moiety is then transferred to the lipoamide cofactor of the H protein. In Escherichia coli (strain SE11), this protein is Glycine dehydrogenase (decarboxylating).